The chain runs to 432 residues: Trigger factor (432 aa).

Residues G163–P248 form the PPIase FKBP-type domain.

It belongs to the FKBP-type PPIase family. Tig subfamily.

Its subcellular location is the cytoplasm. The catalysed reaction is [protein]-peptidylproline (omega=180) = [protein]-peptidylproline (omega=0). Its function is as follows. Involved in protein export. Acts as a chaperone by maintaining the newly synthesized protein in an open conformation. Functions as a peptidyl-prolyl cis-trans isomerase. The protein is Trigger factor of Nitratidesulfovibrio vulgaris (strain DSM 19637 / Miyazaki F) (Desulfovibrio vulgaris).